A 398-amino-acid chain; its full sequence is 1-deoxy-D-xylulose 5-phosphate reductoisomerase (398 aa).

Residues Thr-14, Gly-15, Ser-16, Ile-17, Gln-42, and Asn-128 each contribute to the NADPH site. Residue Lys-129 coordinates 1-deoxy-D-xylulose 5-phosphate. Glu-130 serves as a coordination point for NADPH. Asp-154 is a binding site for Mn(2+). Ser-155, Glu-156, Ser-185, and His-208 together coordinate 1-deoxy-D-xylulose 5-phosphate. Glu-156 provides a ligand contact to Mn(2+). Gly-214 contributes to the NADPH binding site. 1-deoxy-D-xylulose 5-phosphate contacts are provided by Ser-221, Asn-226, Lys-227, and Glu-230. A Mn(2+)-binding site is contributed by Glu-230.

The protein belongs to the DXR family. Mg(2+) is required as a cofactor. Requires Mn(2+) as cofactor.

The catalysed reaction is 2-C-methyl-D-erythritol 4-phosphate + NADP(+) = 1-deoxy-D-xylulose 5-phosphate + NADPH + H(+). It participates in isoprenoid biosynthesis; isopentenyl diphosphate biosynthesis via DXP pathway; isopentenyl diphosphate from 1-deoxy-D-xylulose 5-phosphate: step 1/6. Catalyzes the NADPH-dependent rearrangement and reduction of 1-deoxy-D-xylulose-5-phosphate (DXP) to 2-C-methyl-D-erythritol 4-phosphate (MEP). The chain is 1-deoxy-D-xylulose 5-phosphate reductoisomerase from Dechloromonas aromatica (strain RCB).